Here is a 349-residue protein sequence, read N- to C-terminus: Ion-translocating oxidoreductase complex subunit D (349 aa).

3 consecutive transmembrane segments (helical) span residues 20 to 42 (VMQR…FGWG), 77 to 99 (SAML…WMIV), and 124 to 144 (AMAA…TWIA). Thr-185 is modified (FMN phosphoryl threonine). The next 5 membrane-spanning stretches (helical) occupy residues 212–232 (STGV…LVLL), 239–259 (WHIS…GFLL), 265–285 (ASPL…FIAT), 291–311 (ATSP…VYII), and 315–335 (GGYP…APFI).

This sequence belongs to the NqrB/RnfD family. The complex is composed of six subunits: RnfA, RnfB, RnfC, RnfD, RnfE and RnfG. FMN is required as a cofactor.

It localises to the cell inner membrane. Its function is as follows. Part of a membrane-bound complex that couples electron transfer with translocation of ions across the membrane. In Shewanella baltica (strain OS195), this protein is Ion-translocating oxidoreductase complex subunit D.